We begin with the raw amino-acid sequence, 99 residues long: UPF0235 protein Sbal223_1335 (99 aa).

This sequence belongs to the UPF0235 family.

The protein is UPF0235 protein Sbal223_1335 of Shewanella baltica (strain OS223).